A 268-amino-acid polypeptide reads, in one-letter code: Undecaprenyl-diphosphatase (268 aa).

7 consecutive transmembrane segments (helical) span residues 47–67, 83–103, 109–129, 144–164, 184–204, 218–238, and 246–266; these read FAIL…FFKL, FIIG…IAGK, LFDP…LLWV, YPLM…IPGV, AAEF…VYDF, LIAI…KAFL, and FVLF…ALAL.

This sequence belongs to the UppP family.

It localises to the cell inner membrane. It catalyses the reaction di-trans,octa-cis-undecaprenyl diphosphate + H2O = di-trans,octa-cis-undecaprenyl phosphate + phosphate + H(+). In terms of biological role, catalyzes the dephosphorylation of undecaprenyl diphosphate (UPP). Confers resistance to bacitracin. The sequence is that of Undecaprenyl-diphosphatase from Bradyrhizobium sp. (strain ORS 278).